We begin with the raw amino-acid sequence, 421 residues long: Serine--tRNA ligase (421 aa).

225–227 (TAE) contributes to the L-serine binding site. Residues 256 to 258 (RSE) and valine 272 each bind ATP. An L-serine-binding site is contributed by glutamate 279. Residue 345-348 (ETHS) coordinates ATP. Position 380 (threonine 380) interacts with L-serine.

It belongs to the class-II aminoacyl-tRNA synthetase family. Type-1 seryl-tRNA synthetase subfamily. Homodimer. A single tRNA molecule binds across the dimer.

Its subcellular location is the cytoplasm. It carries out the reaction tRNA(Ser) + L-serine + ATP = L-seryl-tRNA(Ser) + AMP + diphosphate + H(+). The enzyme catalyses tRNA(Sec) + L-serine + ATP = L-seryl-tRNA(Sec) + AMP + diphosphate + H(+). It participates in aminoacyl-tRNA biosynthesis; selenocysteinyl-tRNA(Sec) biosynthesis; L-seryl-tRNA(Sec) from L-serine and tRNA(Sec): step 1/1. In terms of biological role, catalyzes the attachment of serine to tRNA(Ser). Is also probably able to aminoacylate tRNA(Sec) with serine, to form the misacylated tRNA L-seryl-tRNA(Sec), which will be further converted into selenocysteinyl-tRNA(Sec). The protein is Serine--tRNA ligase (serS) of Thermus thermophilus (strain ATCC BAA-163 / DSM 7039 / HB27).